The primary structure comprises 668 residues: DNA ligase (668 aa).

Residues 31–35 (DAEYD), 80–81 (SL), and Glu112 each bind NAD(+). Lys114 acts as the N6-AMP-lysine intermediate in catalysis. 4 residues coordinate NAD(+): Arg135, Glu172, Lys289, and Lys313. Positions 407, 410, 425, and 431 each coordinate Zn(2+). The 78-residue stretch at 591–668 (SVPQPLAGKV…NEEQLIELLN (78 aa)) folds into the BRCT domain.

Belongs to the NAD-dependent DNA ligase family. LigA subfamily. The cofactor is Mg(2+). Mn(2+) serves as cofactor.

It catalyses the reaction NAD(+) + (deoxyribonucleotide)n-3'-hydroxyl + 5'-phospho-(deoxyribonucleotide)m = (deoxyribonucleotide)n+m + AMP + beta-nicotinamide D-nucleotide.. Functionally, DNA ligase that catalyzes the formation of phosphodiester linkages between 5'-phosphoryl and 3'-hydroxyl groups in double-stranded DNA using NAD as a coenzyme and as the energy source for the reaction. It is essential for DNA replication and repair of damaged DNA. In Aliivibrio fischeri (strain ATCC 700601 / ES114) (Vibrio fischeri), this protein is DNA ligase.